A 542-amino-acid polypeptide reads, in one-letter code: Sodium/hydrogen exchanger 8 (542 aa).

Helical transmembrane passes span 55–75 (EQSSGMTIFFSLLVLAICIIL), 79–99 (LIRYRLHFLPESVAVVSLGIL), 118–138 (EEMFRPNMFFLLLLPPIIFES), 151–171 (IGSITLFAVFGTAISAFVVGG), 186–206 (NMTDSFAFGSLISAVDPVATI), 256–276 (TFLQALDYFLKMFFGSAALGT), 306–326 (AYLPYGLAEGISLSETCVFAF), 349–369 (LVLFGRAVNIFPLSYLLNFFR), 374–394 (TPKMMFIMWFSGLRGAIPYAL), 412–432 (TTIVIVLFTILLLGGSTMPLI), and 446–466 (NKKDVNLSKTEKMGNTVESEH). Thr471 carries the post-translational modification Phosphothreonine. 2 positions are modified to phosphoserine: Ser532 and Ser534.

It belongs to the monovalent cation:proton antiporter 1 (CPA1) transporter (TC 2.A.36) family.

It is found in the golgi apparatus membrane. The protein resides in the golgi apparatus. The protein localises to the trans-Golgi network membrane. It localises to the endosome. Its subcellular location is the multivesicular body membrane. It is found in the apical cell membrane. The protein resides in the cytoplasmic vesicle. The protein localises to the secretory vesicle. It localises to the acrosome. It carries out the reaction Na(+)(in) + H(+)(out) = Na(+)(out) + H(+)(in). Its function is as follows. Na(+)/H(+) antiporter. Mediates the electoneutral exchange of intracellular H(+) ions for extracellular Na(+) in 1:1 stoichiometry. Acts as an Na(+)/H(+) exchanger in the trans-Golgi. Contributes to the regulation of pH regulation of Golgi apparatus, and consequently, in protein trafficking and endosomal morphology. In germ cells, plays a crucial role in acrosome biogenesis and sperm development, probably by playing a role in the fusion of the Golgi-derived vesicles that form the acrosomal cap. Can also be active at the cell surface of specialized cells. In the small intestine, at the cell membrane, plays a major physiological role in transepithelial absorption of Na(+) and regulates intracellular pH homeostasis of intestinal epithelial cells. Acts as an important regulator of mucosal integrity in the intestine and in the stomach, could mediate the pH fluctuation necessary for mucin exocytosis or assist membrane trafficking of other proteins. Plays a role in photoreceptor survival and in the maintenance of intracellular pH homeostasis in retinal pigment epithelium (RPE cells). The sequence is that of Sodium/hydrogen exchanger 8 (SLC9A8) from Macaca fascicularis (Crab-eating macaque).